We begin with the raw amino-acid sequence, 250 residues long: MAEQTLSFVDCLTSRFPTVRVSVAQPRGEITLDVPAVEWCAVCRALRDEFDFEQLSDLCGVDYLGYGNTEWDTTDVSAQGFSRGVAGKAVGRFAWGEFPSAGSNDGTQPWDVPQERFAVLAHLISYRHNRRLRVRCFASNDALPIVASLTDVWPGVNWFEREAFDLFGIVFEGHPDLRRILTDYGFIGHPFRKDFPLTGNVEVRYDEEKKRVVYVPVTSVEPRVSVPRVIRDDARFGAAAGESTHSETVK.

This sequence belongs to the complex I 30 kDa subunit family. NDH-1 is composed of 14 different subunits. Subunits NuoB, C, D, E, F, and G constitute the peripheral sector of the complex.

The protein resides in the cell inner membrane. It carries out the reaction a quinone + NADH + 5 H(+)(in) = a quinol + NAD(+) + 4 H(+)(out). NDH-1 shuttles electrons from NADH, via FMN and iron-sulfur (Fe-S) centers, to quinones in the respiratory chain. The immediate electron acceptor for the enzyme in this species is believed to be ubiquinone. Couples the redox reaction to proton translocation (for every two electrons transferred, four hydrogen ions are translocated across the cytoplasmic membrane), and thus conserves the redox energy in a proton gradient. This Xylella fastidiosa (strain 9a5c) protein is NADH-quinone oxidoreductase subunit C.